We begin with the raw amino-acid sequence, 431 residues long: U-box domain-containing protein 20 (431 aa).

Positions 32-106 (TIPSQFQCPI…QGWCGSSLGG (75 aa)) constitute a U-box domain.

It catalyses the reaction S-ubiquitinyl-[E2 ubiquitin-conjugating enzyme]-L-cysteine + [acceptor protein]-L-lysine = [E2 ubiquitin-conjugating enzyme]-L-cysteine + N(6)-ubiquitinyl-[acceptor protein]-L-lysine.. It functions in the pathway protein modification; protein ubiquitination. Functionally, functions as an E3 ubiquitin ligase. This chain is U-box domain-containing protein 20 (PUB20), found in Arabidopsis thaliana (Mouse-ear cress).